A 122-amino-acid polypeptide reads, in one-letter code: Large ribosomal subunit protein uL14 (122 aa).

It belongs to the universal ribosomal protein uL14 family. In terms of assembly, part of the 50S ribosomal subunit. Forms a cluster with proteins L3 and L19. In the 70S ribosome, L14 and L19 interact and together make contacts with the 16S rRNA in bridges B5 and B8.

In terms of biological role, binds to 23S rRNA. Forms part of two intersubunit bridges in the 70S ribosome. The chain is Large ribosomal subunit protein uL14 from Allorhizobium ampelinum (strain ATCC BAA-846 / DSM 112012 / S4) (Agrobacterium vitis (strain S4)).